The primary structure comprises 369 residues: Dihydroorotate dehydrogenase (quinone) (369 aa).

Residues 66-70 and Thr-90 contribute to the FMN site; that span reads AGFDK. Lys-70 contacts substrate. Residue 115–119 coordinates substrate; it reads NRMGF. FMN contacts are provided by Asn-143 and Asn-176. Substrate is bound at residue Asn-176. The active-site Nucleophile is the Ser-179. A substrate-binding site is contributed by Asn-181. Residues Lys-217 and Thr-245 each coordinate FMN. A substrate-binding site is contributed by 246-247; sequence NT. Residues Gly-271, Gly-300, and 321–322 each bind FMN; that span reads YT.

Belongs to the dihydroorotate dehydrogenase family. Type 2 subfamily. As to quaternary structure, monomer. The cofactor is FMN.

Its subcellular location is the cell membrane. The enzyme catalyses (S)-dihydroorotate + a quinone = orotate + a quinol. The protein operates within pyrimidine metabolism; UMP biosynthesis via de novo pathway; orotate from (S)-dihydroorotate (quinone route): step 1/1. In terms of biological role, catalyzes the conversion of dihydroorotate to orotate with quinone as electron acceptor. The polypeptide is Dihydroorotate dehydrogenase (quinone) (Nocardia farcinica (strain IFM 10152)).